A 383-amino-acid polypeptide reads, in one-letter code: tRNA (guanine(26)-N(2))-dimethyltransferase (383 aa).

One can recognise a Trm1 methyltransferase domain in the interval Glu-4–Leu-371. S-adenosyl-L-methionine is bound by residues Arg-38, Arg-63, Asp-80, Asp-108, and Ala-109. Zn(2+) is bound by residues Cys-243, Cys-246, Cys-258, and Cys-261.

The protein belongs to the class I-like SAM-binding methyltransferase superfamily. Trm1 family.

The enzyme catalyses guanosine(26) in tRNA + 2 S-adenosyl-L-methionine = N(2)-dimethylguanosine(26) in tRNA + 2 S-adenosyl-L-homocysteine + 2 H(+). Its function is as follows. Dimethylates a single guanine residue at position 26 of a number of tRNAs using S-adenosyl-L-methionine as donor of the methyl groups. The protein is tRNA (guanine(26)-N(2))-dimethyltransferase of Methanopyrus kandleri (strain AV19 / DSM 6324 / JCM 9639 / NBRC 100938).